The chain runs to 406 residues: Testis-specific Y-encoded-like protein 5 (406 aa).

The segment covering 1 to 25 (MSGRSRGRKSSRAKGRGKGRARARV) has biased composition (basic residues). 3 disordered regions span residues 1 to 67 (MSGR…PAEL), 132 to 164 (IGNRRVPGRKAPDTRSATGRGPQATVSGKPKMA), and 382 to 406 (RGEKGKEERPGPAKLSPAPAVRQPN). The segment covering 27–38 (AAAEDAWHDEKP) has biased composition (basic and acidic residues). The span at 49–62 (AAAQVQAGAAQGGA) shows a compositional bias: low complexity. The segment covering 382 to 392 (RGEKGKEERPG) has biased composition (basic and acidic residues).

The protein belongs to the nucleosome assembly protein (NAP) family. In terms of assembly, interacts with USP7.

Functionally, involved in modulation of cell growth and cellular response to gamma radiation probably via regulation of the Akt signaling pathway. Involved in regulation of p53/TP53. Suppresses p53/TP53 protein levels and promotes its ubiquitination; the function is dependent on USP7 and independent on MDM2. Proposed to displace p53/TP53 from interaction with USP7. The protein is Testis-specific Y-encoded-like protein 5 (Tspyl5) of Mus musculus (Mouse).